The sequence spans 195 residues: ATP synthase subunit b (195 aa).

Residues 28-48 (IFPNVYVLIAHVISLIFLLLL) traverse the membrane as a helical segment.

It belongs to the ATPase B chain family. As to quaternary structure, F-type ATPases have 2 components, F(1) - the catalytic core - and F(0) - the membrane proton channel. F(1) has five subunits: alpha(3), beta(3), gamma(1), delta(1), epsilon(1). F(0) has three main subunits: a(1), b(2) and c(10-14). The alpha and beta chains form an alternating ring which encloses part of the gamma chain. F(1) is attached to F(0) by a central stalk formed by the gamma and epsilon chains, while a peripheral stalk is formed by the delta and b chains.

The protein localises to the cell membrane. F(1)F(0) ATP synthase produces ATP from ADP in the presence of a proton or sodium gradient. F-type ATPases consist of two structural domains, F(1) containing the extramembraneous catalytic core and F(0) containing the membrane proton channel, linked together by a central stalk and a peripheral stalk. During catalysis, ATP synthesis in the catalytic domain of F(1) is coupled via a rotary mechanism of the central stalk subunits to proton translocation. Its function is as follows. Component of the F(0) channel, it forms part of the peripheral stalk, linking F(1) to F(0). This Malacoplasma penetrans (strain HF-2) (Mycoplasma penetrans) protein is ATP synthase subunit b.